We begin with the raw amino-acid sequence, 225 residues long: Urease accessory protein UreG (225 aa).

Residues 1–21 form a disordered region; that stretch reads MHLDHHHESAAAVSADARRPD. A GTP-binding site is contributed by 33 to 40; sequence GPVGSGKT.

Belongs to the SIMIBI class G3E GTPase family. UreG subfamily. Homodimer. UreD, UreF and UreG form a complex that acts as a GTP-hydrolysis-dependent molecular chaperone, activating the urease apoprotein by helping to assemble the nickel containing metallocenter of UreC. The UreE protein probably delivers the nickel.

Its subcellular location is the cytoplasm. Functionally, facilitates the functional incorporation of the urease nickel metallocenter. This process requires GTP hydrolysis, probably effectuated by UreG. In Streptomyces coelicolor (strain ATCC BAA-471 / A3(2) / M145), this protein is Urease accessory protein UreG.